The chain runs to 446 residues: Na(+)-translocating NADH-quinone reductase subunit A (446 aa).

The protein belongs to the NqrA family. In terms of assembly, composed of six subunits; NqrA, NqrB, NqrC, NqrD, NqrE and NqrF.

The catalysed reaction is a ubiquinone + n Na(+)(in) + NADH + H(+) = a ubiquinol + n Na(+)(out) + NAD(+). Its function is as follows. NQR complex catalyzes the reduction of ubiquinone-1 to ubiquinol by two successive reactions, coupled with the transport of Na(+) ions from the cytoplasm to the periplasm. NqrA to NqrE are probably involved in the second step, the conversion of ubisemiquinone to ubiquinol. The chain is Na(+)-translocating NADH-quinone reductase subunit A from Vibrio campbellii (strain ATCC BAA-1116).